A 454-amino-acid chain; its full sequence is Mannosylfructose-phosphate synthase (454 aa).

It belongs to the glycosyltransferase 1 family. It depends on Mg(2+) as a cofactor. Mn(2+) is required as a cofactor.

It carries out the reaction beta-D-fructose 6-phosphate + GDP-alpha-D-mannose = beta-D-fructofuranosyl alpha-D-mannopyranoside 6(F)-phosphate + GDP + H(+). Its pathway is carbohydrate metabolism; mannosylfructose biosynthesis; beta-D-fructofuranosyl alpha-D-mannopyranoside from D-fructose 6-phosphate and GDP-alpha-D-mannose: step 1/2. The protein is Mannosylfructose-phosphate synthase of Agrobacterium fabrum (strain C58 / ATCC 33970) (Agrobacterium tumefaciens (strain C58)).